The chain runs to 196 residues: UMP-CMP kinase (196 aa).

G13–T18 is a binding site for ATP. S33 carries the post-translational modification Phosphoserine. An NMP region spans residues S33 to V63. R39 serves as a coordination point for a ribonucleoside 5'-phosphate. N6-acetyllysine is present on residues K43 and K55. A ribonucleoside 5'-phosphate is bound by residues K61 to V63 and G93 to R96. Residue N100 participates in CMP binding. K106 carries the post-translational modification N6-succinyllysine. The tract at residues E133–D143 is LID. R134 contributes to the ATP binding site. The a ribonucleoside 5'-phosphate site is built by R140 and R151. Residue K179 coordinates ATP. Residue S180 is modified to Phosphoserine.

Belongs to the adenylate kinase family. UMP-CMP kinase subfamily. In terms of assembly, monomer. Mg(2+) serves as cofactor.

The protein localises to the nucleus. The protein resides in the cytoplasm. The enzyme catalyses CMP + ATP = CDP + ADP. The catalysed reaction is dCMP + ATP = dCDP + ADP. It carries out the reaction UMP + ATP = UDP + ADP. It catalyses the reaction a 2'-deoxyribonucleoside 5'-diphosphate + ATP = a 2'-deoxyribonucleoside 5'-triphosphate + ADP. The enzyme catalyses a ribonucleoside 5'-diphosphate + ATP = a ribonucleoside 5'-triphosphate + ADP. Catalyzes the phosphorylation of pyrimidine nucleoside monophosphates at the expense of ATP. Plays an important role in de novo pyrimidine nucleotide biosynthesis. Has preference for UMP and CMP as phosphate acceptors. Also displays broad nucleoside diphosphate kinase activity. The protein is UMP-CMP kinase of Sus scrofa (Pig).